The following is a 147-amino-acid chain: MNSFRKTCAGALALIFGATSIVPTVAAPMNMDRPAINQNVIQARAHYRPQNYNRGHRPGYWHGHRGYRHYRHGYRRHNDGWWYPLAAFGAGAIIGGAISQPRPVYRAPAGSPHVQWCYSRYKSYRASDNTFQPYNGPRKQCRSPYSR.

An N-terminal signal peptide occupies residues 1–26 (MNSFRKTCAGALALIFGATSIVPTVA). A helical transmembrane segment spans residues 80-100 (GWWYPLAAFGAGAIIGGAISQ).

It belongs to the BA14k family.

It localises to the cell membrane. Functionally, has immunoglobulin-binding and hemagglutination properties, and can bind to mannose. Essential for virulence. May be involved in LPS biosynthesis or polysaccharide transport. The chain is Lectin-like protein BA14k from Brucella abortus (strain S19).